The sequence spans 1183 residues: PAN2-PAN3 deadenylation complex catalytic subunit PAN2 (1183 aa).

Positions 1 to 24 (MDGWTEISRIAATTQPPKGPSPHI) are disordered. WD repeat units lie at residues 159 to 207 (DLNK…SIKS), 269 to 309 (PFPA…NVFL), and 327 to 366 (SKAP…STIT). A linker region spans residues 369-520 (FVNFPASIEQ…FQYKVPLSRK (152 aa)). In terms of domain architecture, USP spans 521-919 (KIPNCYSRLQ…KPVILVYHDS (399 aa)). In terms of domain architecture, Exonuclease spans 977–1151 (IAIDAEFVNL…EDAYTALLLY (175 aa)). A divalent metal cation contacts are provided by Asp-980, Glu-982, Asp-1090, and Asp-1143.

The protein belongs to the peptidase C19 family. PAN2 subfamily. As to quaternary structure, forms a heterotrimer with an asymmetric homodimer of the regulatory subunit PAN3 to form the poly(A)-nuclease (PAN) deadenylation complex. A divalent metal cation is required as a cofactor.

The protein localises to the cytoplasm. It catalyses the reaction Exonucleolytic cleavage of poly(A) to 5'-AMP.. With respect to regulation, positively regulated by the regulatory subunit PAN3. In terms of biological role, catalytic subunit of the poly(A)-nuclease (PAN) deadenylation complex, one of two cytoplasmic mRNA deadenylases involved in mRNA turnover. PAN specifically shortens poly(A) tails of RNA and the activity is stimulated by poly(A)-binding protein PAB1. PAN deadenylation is followed by rapid degradation of the shortened mRNA tails by the CCR4-NOT complex. Deadenylated mRNAs are then degraded by two alternative mechanisms, namely exosome-mediated 3'-5' exonucleolytic degradation, or deadenylation-dependent mRNA decaping and subsequent 5'-3' exonucleolytic degradation by XRN1. May also be involved in post-transcriptional maturation of mRNA poly(A) tails. The protein is PAN2-PAN3 deadenylation complex catalytic subunit PAN2 of Scheffersomyces stipitis (strain ATCC 58785 / CBS 6054 / NBRC 10063 / NRRL Y-11545) (Yeast).